Consider the following 394-residue polypeptide: V-type proton ATPase subunit C (394 aa).

Position 17 is a phosphoserine (Ser-17).

Belongs to the V-ATPase C subunit family. V-ATPase is a heteromultimeric enzyme composed of a peripheral catalytic V1 complex (components A to H) attached to an integral membrane V0 proton pore complex (components: a, c, c', c'', d, e, f and VOA1).

The protein localises to the cytoplasm. It is found in the vacuole membrane. Its function is as follows. Subunit of the V1 complex of vacuolar(H+)-ATPase (V-ATPase), a multisubunit enzyme composed of a peripheral complex (V1) that hydrolyzes ATP and a membrane integral complex (V0) that translocates protons. V-ATPase is responsible for acidifying and maintaining the pH of intracellular compartments. Subunit C is necessary for the assembly of the catalytic sector of the enzyme and is likely to have a specific function in its catalytic activity. Reversibly leaves the enzyme after glucose depletion, causing the catalytic subcomplex V1 to detach from the V0 section. This is V-type proton ATPase subunit C from Schizosaccharomyces pombe (strain 972 / ATCC 24843) (Fission yeast).